The following is a 225-amino-acid chain: UPF0725 protein At5g63820 (225 aa).

This sequence belongs to the UPF0725 (EMB2204) family.

This Arabidopsis thaliana (Mouse-ear cress) protein is UPF0725 protein At5g63820.